Here is a 328-residue protein sequence, read N- to C-terminus: MKRPREPSGSDSESDGPIDVGREGELSQMARPLSTPSPSQMQARKKRRGIIEKRRRDRINSSLSELRRLVPTAFEKQGSSKLEKAEVLQMTVDHLKMLHATGGTGFFDARALAVDFRSIGFRECLTEVIRYLGVLEGPSSRADPVRIRLLSHLNSYAAEMEPSPTPPGPLAFPAWPWSFFHSCPGLSAPSNQLAILGRVPGPMLPNASSLAYPIPGLRAAPLRRAAGTILPARRNLLPSRGASSTRRARPLERPAAPLPAAPSGRATRGSHMAPLLRSPSPVSPGMVGSPAYMAVPAPRPSSPGLAGRPAGAMLCRSWVSEITEVGAF.

The interval 1-54 is disordered; the sequence is MKRPREPSGSDSESDGPIDVGREGELSQMARPLSTPSPSQMQARKKRRGIIEKR. The interval 42–111 is transcriptional repression and interaction with NCOR1 and SIN3A; it reads QARKKRRGII…GGTGFFDARA (70 aa). The bHLH domain occupies 43–98; that stretch reads ARKKRRGIIEKRRRDRINSSLSELRRLVPTAFEKQGSSKLEKAEVLQMTVDHLKML. In terms of domain architecture, Orange spans 116–153; sequence FRSIGFRECLTEVIRYLGVLEGPSSRADPVRIRLLSHL. The interval 236 to 272 is disordered; that stretch reads LLPSRGASSTRRARPLERPAAPLPAAPSGRATRGSHM.

This sequence belongs to the HEY family. In terms of assembly, self-associates. Interacts with GATA4, GATA6, HES1, HEY1 and HEY2. Interacts with HDAC1, NCOR1 and SIN3A.

The protein localises to the nucleus. Downstream effector of Notch signaling which may be required for cardiovascular development. Transcriptional repressor which binds preferentially to the canonical E box sequence 5'-CACGTG-3'. Represses transcription by the cardiac transcriptional activators GATA4 and GATA6. The polypeptide is Hairy/enhancer-of-split related with YRPW motif-like protein (HEYL) (Bos taurus (Bovine)).